The following is a 131-amino-acid chain: UPF0102 protein YraN (131 aa).

The protein belongs to the UPF0102 family.

The chain is UPF0102 protein YraN from Salmonella typhimurium (strain LT2 / SGSC1412 / ATCC 700720).